Here is a 480-residue protein sequence, read N- to C-terminus: Glutathione reductase (480 aa).

The FAD site is built by S31 and G32. Residue S31 coordinates glutathione. R38 serves as a coordination point for glutathione. Residues E51, T58, C59, and K67 each coordinate FAD. C59 and C64 are disulfide-bonded. Residue Y121 participates in glutathione binding. A137 is an FAD binding site. I206, E209, R226, and G291 together coordinate NADP(+). FAD is bound at residue D331. E337 is an NADP(+) binding site. T339 is an FAD binding site. Position 347 (R347) interacts with glutathione. V372 provides a ligand contact to NADP(+). K422 is a binding site for glutathione. H469 contributes to the FAD binding site. Catalysis depends on H469, which acts as the Proton acceptor.

The protein belongs to the class-I pyridine nucleotide-disulfide oxidoreductase family. As to quaternary structure, homodimer. It depends on FAD as a cofactor.

The protein resides in the cytoplasm. The protein localises to the mitochondrion. The catalysed reaction is 2 glutathione + NADP(+) = glutathione disulfide + NADPH + H(+). Catalyzes the reduction of glutathione disulfide (GSSG) to reduced glutathione (GSH). Constitutes the major mechanism to maintain a high GSH:GSSG ratio in the cytosol. The protein is Glutathione reductase (GLR1) of Eremothecium gossypii (strain ATCC 10895 / CBS 109.51 / FGSC 9923 / NRRL Y-1056) (Yeast).